A 101-amino-acid chain; its full sequence is CRISPR-associated endoribonuclease Cas2 (101 aa).

Asp17 is a binding site for Mg(2+).

This sequence belongs to the CRISPR-associated endoribonuclease Cas2 protein family. In terms of assembly, homodimer, forms a heterotetramer with a Cas1 homodimer. Requires Mg(2+) as cofactor.

Its function is as follows. CRISPR (clustered regularly interspaced short palindromic repeat), is an adaptive immune system that provides protection against mobile genetic elements (viruses, transposable elements and conjugative plasmids). CRISPR clusters contain sequences complementary to antecedent mobile elements and target invading nucleic acids. CRISPR clusters are transcribed and processed into CRISPR RNA (crRNA). Functions as a ssRNA-specific endoribonuclease. Involved in the integration of spacer DNA into the CRISPR cassette. The chain is CRISPR-associated endoribonuclease Cas2 from Methanopyrus kandleri (strain AV19 / DSM 6324 / JCM 9639 / NBRC 100938).